Here is a 3072-residue protein sequence, read N- to C-terminus: Eukaryotic translation initiation factor 2-alpha kinase PK4 (3072 aa).

The Cytoplasmic segment spans residues 1–106 (MCNFIKKGIR…EFRWLINKLE (106 aa)). The helical transmembrane segment at 107 to 127 (IIYFYFFCHLLLLCIFQNIFL) threads the bilayer. The Lumenal portion of the chain corresponds to 128-1643 (LTYMSKEYFL…FTSIRYKRRR (1516 aa)). Residues 383 to 402 (KEKCHRDEKCDRGENYDRGE) are disordered. The interval 576-610 (KKKILDENDMITIDNNIDKKENILFPYFHMEILKD) is 10 X 7 AA tandem repeat of D-K-N-[GE]-L-D-[GD]. A disordered region spans residues 970 to 1010 (QYEDNNDNDNNKNDNNKNDNNKNDNNKNDNNNNNNNNNNNS). The span at 978–996 (DNNKNDNNKNDNNKNDNNK) shows a compositional bias: basic and acidic residues. Residues 997 to 1009 (NDNNNNNNNNNNN) are compositionally biased toward low complexity. The helical transmembrane segment at 1644 to 1664 (WYWRVFYTIMFIIFFPVLFIY) threads the bilayer. Residues 1665 to 3072 (RRIIKRRKGS…IKNENNGADK (1408 aa)) are Cytoplasmic-facing. Disordered regions lie at residues 1737-1766 (KNYN…SKSN) and 1917-1937 (KVGS…KDKK). A compositionally biased stretch (low complexity) spans 1738-1766 (NYNNNNNNNNNKNNNNISNNNSNSNSKSN). The span at 1928-1937 (NYTDNEKDKK) shows a compositional bias: basic and acidic residues. Residues 2152–2160 (IGQGGFGSV) and K2177 each bind ATP. 3 disordered regions span residues 2316–2402 (FYSD…EGRD), 2479–2558 (RNED…KKLD), and 2691–2749 (ENDD…DDDI). Positions 2326–2335 (KNKENPEKNH) are enriched in basic and acidic residues. A compositionally biased stretch (basic residues) spans 2362-2384 (HKLKKRKNKKKKSKKKRKSKSKI). 10 tandem repeats follow at residues 2483–2489 (DKNGLDG), 2490–2496 (DKNGLDG), 2497–2503 (DKNGLDG), 2504–2510 (DKNGLDG), 2511–2517 (DKNGLDG), 2518–2524 (DKNELDG), 2525–2531 (DKNGLDG), 2532–2538 (DKNGLDG), 2539–2545 (DKNGLDG), and 2546–2552 (DKNELDD). The region spanning 2627–2998 (TNVESINTNG…KIKVLLDPHL (372 aa)) is the Protein kinase domain. Residues 2692–2702 (NDDDDDDDDDN) show a composition bias toward acidic residues. The active-site Proton acceptor is D2835. The residue at position 2902 (T2902) is a Phosphothreonine.

It belongs to the protein kinase superfamily. Ser/Thr protein kinase family. GCN2 subfamily. In terms of assembly, may form oligomers in response to stress; oligomerization may result in catalytic activity. Interacts with BIP; the interaction is disrupted in response to stress. Auto-phosphorylated.

The protein localises to the endoplasmic reticulum membrane. The catalysed reaction is L-seryl-[protein] + ATP = O-phospho-L-seryl-[protein] + ADP + H(+). It catalyses the reaction L-threonyl-[protein] + ATP = O-phospho-L-threonyl-[protein] + ADP + H(+). Its activity is regulated as follows. Dissociation from BIP and oligomerization, may results autophosphorylation and kinase activity induction. During the asexual blood stage, phosphorylates translation factor eIF2alpha in late schizonts resulting in protein translation inhibition. Plays a role in trophozoite differentiation into schizonts. This chain is Eukaryotic translation initiation factor 2-alpha kinase PK4, found in Plasmodium falciparum (isolate 3D7).